The following is a 168-amino-acid chain: Peptidoglycan-associated lipoprotein (168 aa).

A signal peptide spans 1 to 24 (MGRIAALTRNPVMIALVAMLAIAG). Residue Cys25 is the site of N-palmitoyl cysteine attachment. A lipid anchor (S-diacylglycerol cysteine) is attached at Cys25. The OmpA-like domain maps to 50–167 (AQDFTVNIGD…RAVTTLSGAG (118 aa)).

It belongs to the Pal lipoprotein family. As to quaternary structure, the Tol-Pal system is composed of five core proteins: the inner membrane proteins TolA, TolQ and TolR, the periplasmic protein TolB and the outer membrane protein Pal. They form a network linking the inner and outer membranes and the peptidoglycan layer.

The protein localises to the cell outer membrane. Its function is as follows. Part of the Tol-Pal system, which plays a role in outer membrane invagination during cell division and is important for maintaining outer membrane integrity. In Mesorhizobium japonicum (strain LMG 29417 / CECT 9101 / MAFF 303099) (Mesorhizobium loti (strain MAFF 303099)), this protein is Peptidoglycan-associated lipoprotein.